Reading from the N-terminus, the 275-residue chain is MQAKSICFIGGGNMAQAIIFGLLKQGYPANQITVSDPNAAKRQCLAEKGVNTVEASQTDTQDAVETSEVLLLAVKPQMIAAVCQGLSAVDFSQKLVISIAAGVSVTKLQSRLPTAKQIVRVMPNTPALVAEGMSGLFAQNSLKPEYKQFTQDLLNAVGKTCWVTQEADMHTITAGSGSSPAYFFLFMEAMQQALCQMNMDEDTARLLVQQSALGAAKMVIENPDLPIATLRENVTSKGGTTAAALQVLNQQQLQHIVQQAMQACVERSQQMEKLF.

This sequence belongs to the pyrroline-5-carboxylate reductase family.

It is found in the cytoplasm. The catalysed reaction is L-proline + NADP(+) = (S)-1-pyrroline-5-carboxylate + NADPH + 2 H(+). It carries out the reaction L-proline + NAD(+) = (S)-1-pyrroline-5-carboxylate + NADH + 2 H(+). It functions in the pathway amino-acid biosynthesis; L-proline biosynthesis; L-proline from L-glutamate 5-semialdehyde: step 1/1. Its function is as follows. Catalyzes the reduction of 1-pyrroline-5-carboxylate (PCA) to L-proline. This is Pyrroline-5-carboxylate reductase from Pasteurella multocida (strain Pm70).